A 147-amino-acid chain; its full sequence is Cyanate hydratase (147 aa).

Active-site residues include Arg88, Glu91, and Ser114.

Belongs to the cyanase family.

The enzyme catalyses cyanate + hydrogencarbonate + 3 H(+) = NH4(+) + 2 CO2. Functionally, catalyzes the reaction of cyanate with bicarbonate to produce ammonia and carbon dioxide. The polypeptide is Cyanate hydratase (Variovorax paradoxus (strain S110)).